The primary structure comprises 380 residues: F-box protein At4g18380 (380 aa).

Positions I22 to V70 constitute an F-box domain.

The protein is F-box protein At4g18380 of Arabidopsis thaliana (Mouse-ear cress).